We begin with the raw amino-acid sequence, 149 residues long: Calmodulin (149 aa).

EF-hand domains are found at residues 8-43, 44-79, 81-116, and 117-149; these read QQIA…LGQN, PSES…KMKD, DSEA…IGEK, and LSDA…LAAK. Ca(2+)-binding residues include D21, D23, D25, K27, E32, D57, N59, D61, S63, E68, D94, N96, D98, K100, E105, D130, N132, D134, E136, and E141.

It belongs to the calmodulin family.

Its function is as follows. Calmodulin mediates the control of a large number of enzymes, ion channels and other proteins by Ca(2+). Among the enzymes to be stimulated by the calmodulin-Ca(2+) complex are a number of protein kinases and phosphatases. The chain is Calmodulin (CMD1) from Candida albicans (Yeast).